A 593-amino-acid polypeptide reads, in one-letter code: Tyrosine-protein phosphatase non-receptor type 11 (593 aa).

N-acetylthreonine is present on Thr-2. SH2 domains lie at 6–102 (WFHP…KYPL) and 112–216 (WFHG…KQPL). 2 positions are modified to phosphotyrosine: Tyr-62 and Tyr-66. A Tyrosine-protein phosphatase domain is found at 247–521 (FWEEFETLQQ…RFIYMAVQHY (275 aa)). Residues Asp-425, 459 to 465 (CSAGIGR), and Gln-506 contribute to the substrate site. The active-site Phosphocysteine intermediate is Cys-459. Tyr-542 and Tyr-580 each carry phosphotyrosine; by PDGFR.

This sequence belongs to the protein-tyrosine phosphatase family. Non-receptor class 2 subfamily. As to quaternary structure, interacts with CD84 and with phosphorylated SIT1 and MZPL1. Interacts with FCRL4, FCRL6 and ANKHD1. Interacts with GAREM1 (tyrosine phosphorylated); the interaction increases MAPK/ERK activity and does not affect the GRB2/SOS complex formation. Interacts with PTPNS1 and BCAR3. Interacts with phosphorylated LIME1. Interacts with SHB and INPP5D/SHIP1. Interacts with KIR2DL1; the interaction is enhanced by ARRB2. Interacts with GAB2. Interacts with TERT; the interaction retains TERT in the nucleus. Interacts with PECAM1 and FER. Interacts with EPHA2 (activated); participates in PTK2/FAK1 dephosphorylation in EPHA2 downstream signaling. Interacts with MILR1 (tyrosine phosphorylated). Interacts with FLT1 (tyrosine-phosphorylated), FLT3 (tyrosine-phosphorylated), FLT4 (tyrosine-phosphorylated), KIT and GRB2. Interacts with ROS1; mediates PTPN11 phosphorylation. Interacts with PDGFRA (tyrosine phosphorylated). Interacts with PDGFRB (tyrosine phosphorylated); this interaction increases the PTPN11 phosphatase activity. Interacts (via SH2 domain) with TEK/TIE2 (tyrosine phosphorylated). Interacts with CEACAM1 (via cytoplasmic domain); this interaction depends on the monomer/dimer equilibrium and is phosphorylation-dependent. Interacts with MPIG6B (via ITIM motif). Interacts with SIGLEC10. Interacts with Lilrb4a (when tyrosine phosphorylated). Interacts with SIGLEC10. Interacts with CLEC12B (via ITIM motif); this interaction triggers dephosphorylation and activation of PTPN11. Interacts (via SH2 domains) with NEDD9/CAS-L; the interaction is enhanced when NEDD9/CAS-L is tyrosine phosphorylated. Interacts with PIRB; when PIRB is phosphorylated by LYN at 'Tyr-794' and 'Tyr-824'. Post-translationally, phosphorylated on Tyr-542 and Tyr-580 upon receptor protein tyrosine kinase activation; which creates a binding site for GRB2 and other SH2-containing proteins. Phosphorylated upon activation of the receptor-type kinase FLT3. Phosphorylated by activated PDGFRB. Phosphorylated upon activation of the receptor-type kinase PDGFRA. In terms of tissue distribution, highly expressed in brain, heart and kidney.

It localises to the cytoplasm. The catalysed reaction is O-phospho-L-tyrosyl-[protein] + H2O = L-tyrosyl-[protein] + phosphate. Its function is as follows. Acts downstream of various receptor and cytoplasmic protein tyrosine kinases to participate in the signal transduction from the cell surface to the nucleus. Positively regulates MAPK signal transduction pathway. Dephosphorylates GAB1, ARHGAP35 and EGFR. Dephosphorylates ROCK2 at 'Tyr-722' resulting in stimulation of its RhoA binding activity. Dephosphorylates CDC73. Dephosphorylates SOX9 on tyrosine residues, leading to inactivate SOX9 and promote ossification. Dephosphorylates tyrosine-phosphorylated NEDD9/CAS-L. The protein is Tyrosine-protein phosphatase non-receptor type 11 (Ptpn11) of Mus musculus (Mouse).